We begin with the raw amino-acid sequence, 101 residues long: Anti-lipopolysaccharide factor (101 aa).

Cys31 and Cys52 form a disulfide bridge.

Functionally, binds tightly to LPS and thus specifically inhibits the LPS-mediated activation of the hemolymph coagulation. It has a strong antibacterial effect especially on the growth of Gram-negative bacteria. The polypeptide is Anti-lipopolysaccharide factor (Limulus polyphemus (Atlantic horseshoe crab)).